Here is a 373-residue protein sequence, read N- to C-terminus: Anhydro-N-acetylmuramic acid kinase (373 aa).

12 to 19 (GTSLDGVD) contributes to the ATP binding site.

The protein belongs to the anhydro-N-acetylmuramic acid kinase family.

The enzyme catalyses 1,6-anhydro-N-acetyl-beta-muramate + ATP + H2O = N-acetyl-D-muramate 6-phosphate + ADP + H(+). Its pathway is amino-sugar metabolism; 1,6-anhydro-N-acetylmuramate degradation. The protein operates within cell wall biogenesis; peptidoglycan recycling. Its function is as follows. Catalyzes the specific phosphorylation of 1,6-anhydro-N-acetylmuramic acid (anhMurNAc) with the simultaneous cleavage of the 1,6-anhydro ring, generating MurNAc-6-P. Is required for the utilization of anhMurNAc either imported from the medium or derived from its own cell wall murein, and thus plays a role in cell wall recycling. The chain is Anhydro-N-acetylmuramic acid kinase from Salmonella agona (strain SL483).